The following is a 378-amino-acid chain: N-acetyllactosaminide beta-1,3-N-acetylglucosaminyltransferase 4 (378 aa).

The Cytoplasmic portion of the chain corresponds to 1–28 (MLPPQPSAAHQGRGGRSGLLPKGPAMLC). A helical; Signal-anchor for type II membrane protein membrane pass occupies residues 29–49 (RLCWLVSYSLAVLLLGCLLFL). At 50-378 (RKAAKPAGDP…KCAAGPIPQR (329 aa)) the chain is on the lumenal side. Residues 59-81 (PTAHQPFWAPPTPRHSRCPPNHT) are disordered. A glycan (N-linked (GlcNAc...) asparagine) is linked at asparagine 192.

It belongs to the glycosyltransferase 31 family. In terms of tissue distribution, mainly expressed in brain tissues such as whole brain, hippocampus, amygdala, cerebellum and caudate nucleus. Also expressed in colon, esophagus and kidney.

It is found in the golgi apparatus membrane. It catalyses the reaction a beta-D-galactosyl-(1-&gt;4)-N-acetyl-beta-D-glucosaminyl derivative + UDP-N-acetyl-alpha-D-glucosamine = an N-acetyl-beta-D-glucosaminyl-(1-&gt;3)-beta-D-galactosyl-(1-&gt;4)-N-acetyl-beta-D-glucosaminyl derivative + UDP + H(+). The protein operates within protein modification; protein glycosylation. In terms of biological role, beta-1,3-N-acetylglucosaminyltransferase involved in the synthesis of poly-N-acetyllactosamine. Has activity for type 2 oligosaccharides. The protein is N-acetyllactosaminide beta-1,3-N-acetylglucosaminyltransferase 4 (B3GNT4) of Homo sapiens (Human).